Consider the following 561-residue polypeptide: Potassium-transporting ATPase potassium-binding subunit (561 aa).

10 helical membrane-spanning segments follow: residues 4 to 24 (IIMQDVFFIVLLLVLAIPLGI), 65 to 85 (AGSVLAFSAIGFVFVMAVLML), 134 to 154 (GLTVQNFVSAATGIAVLFAVI), 177 to 197 (LYILLPLSLVLAILLVSQGVV), 253 to 273 (FTNLIEMLAILLIPVALVVMF), 285 to 305 (AIMTAMMIVFVVGIVAITISE), 380 to 400 (GLYGMIGFIILTVFIAGLLVG), 417 to 437 (MVCLLILVPPLLTLFGTAFAV), 484 to 504 (MVGALMMLFARFIPLIAALYL), and 528 to 548 (FIGLLIGVVVLVGALSFLPAL).

Belongs to the KdpA family. As to quaternary structure, the system is composed of three essential subunits: KdpA, KdpB and KdpC.

It is found in the cell membrane. Its function is as follows. Part of the high-affinity ATP-driven potassium transport (or Kdp) system, which catalyzes the hydrolysis of ATP coupled with the electrogenic transport of potassium into the cytoplasm. This subunit binds the extracellular potassium ions and delivers the ions to the membrane domain of KdpB through an intramembrane tunnel. This Listeria welshimeri serovar 6b (strain ATCC 35897 / DSM 20650 / CCUG 15529 / CIP 8149 / NCTC 11857 / SLCC 5334 / V8) protein is Potassium-transporting ATPase potassium-binding subunit.